We begin with the raw amino-acid sequence, 577 residues long: Glycine--tRNA ligase (577 aa).

The substrate site is built by R98 and E164. ATP-binding positions include 196–198 (RNE), 206–211 (IRLREF), 328–329 (EC), and 451–454 (GIDR). A substrate-binding site is contributed by 211-215 (FTQAE). 447–451 (EPSYG) is a substrate binding site.

This sequence belongs to the class-II aminoacyl-tRNA synthetase family.

The protein localises to the cytoplasm. It catalyses the reaction tRNA(Gly) + glycine + ATP = glycyl-tRNA(Gly) + AMP + diphosphate. Catalyzes the attachment of glycine to tRNA(Gly). In Methanocaldococcus jannaschii (strain ATCC 43067 / DSM 2661 / JAL-1 / JCM 10045 / NBRC 100440) (Methanococcus jannaschii), this protein is Glycine--tRNA ligase.